Reading from the N-terminus, the 465-residue chain is Cysteine--tRNA ligase (465 aa).

Cys-27 contributes to the Zn(2+) binding site. A 'HIGH' region motif is present at residues 29–39; sequence PTVYNFFHIGN. Zn(2+)-binding residues include Cys-207, His-232, and Glu-236. The 'KMSKS' region motif lies at 264 to 268; sequence KMSKS. Position 267 (Lys-267) interacts with ATP.

It belongs to the class-I aminoacyl-tRNA synthetase family. As to quaternary structure, monomer. The cofactor is Zn(2+).

It is found in the cytoplasm. It catalyses the reaction tRNA(Cys) + L-cysteine + ATP = L-cysteinyl-tRNA(Cys) + AMP + diphosphate. The sequence is that of Cysteine--tRNA ligase from Clostridium botulinum (strain Okra / Type B1).